A 69-amino-acid polypeptide reads, in one-letter code: Light-harvesting polypeptide B-800/860 alpha chain (69 aa).

Residues 1 to 14 (MTNGKIWLVVKPTV) lie on the Cytoplasmic side of the membrane. The chain crosses the membrane as a helical span at residues 15-35 (GLPIGMLFAALLAVLIHGLLF). H31 contributes to the a bacteriochlorophyll binding site. The Periplasmic portion of the chain corresponds to 36-69 (VDGRLKSWWSEFPVAKPAVVSVQAAPAPVAAEVK).

Belongs to the antenna complex alpha subunit family. As to quaternary structure, the core complex is formed by different alpha and beta chains, binding bacteriochlorophyll molecules, and arranged most probably in tetrameric structures disposed around the reaction center. The non-pigmented gamma chains may constitute additional components.

The protein resides in the cell inner membrane. Its function is as follows. Antenna complexes are light-harvesting systems, which transfer the excitation energy to the reaction centers. This Rhodocyclus tenuis (Rhodospirillum tenue) protein is Light-harvesting polypeptide B-800/860 alpha chain.